The following is a 62-amino-acid chain: Beta-defensin 33 (62 aa).

An N-terminal signal peptide occupies residues 1 to 20; the sequence is MRLLFLLFILLVCLAQTTSG. 3 disulfides stabilise this stretch: cysteine 30–cysteine 59, cysteine 37–cysteine 52, and cysteine 45–cysteine 60.

This sequence belongs to the beta-defensin family.

It is found in the secreted. In terms of biological role, has antibacterial activity. In Mus musculus (Mouse), this protein is Beta-defensin 33 (Defb33).